An 859-amino-acid chain; its full sequence is Protein SEY1 (859 aa).

The Cytoplasmic segment spans residues 1–742 (MMMNSHFAGV…KRSAIGGITQ (742 aa)). The GB1/RHD3-type G domain maps to 49-291 (GFNYHLISVF…FQPQYHRRIP (243 aa)). 59–66 (GSQSTGKS) is a GTP binding site. Positions 476 to 496 (FEHELKVYRKDLDDVSGRLRK) form a coiled coil. The tract at residues 525 to 544 (LGTGRGGSGAPEHGERPPSE) is disordered. The chain crosses the membrane as a helical span at residues 743–763 (VPLYFYGLLVALGWNEIVAVL). Residues 764 to 766 (RNP) are Lumenal-facing. The chain crosses the membrane as a helical span at residues 767–787 (VYFIFLILCAVGAYVTYTLNL). The Cytoplasmic portion of the chain corresponds to 788–859 (WGPMIRMGNA…DAEVEDLDDI (72 aa)). The tract at residues 816–859 (SSESGRQAMAMSGNQPRGESVRMNRLNGNGKKDEDAEVEDLDDI) is disordered. The span at 850–859 (DAEVEDLDDI) shows a compositional bias: acidic residues.

Belongs to the TRAFAC class dynamin-like GTPase superfamily. GB1/RHD3 GTPase family. RHD3 subfamily.

The protein localises to the endoplasmic reticulum membrane. Functionally, cooperates with the reticulon proteins and tubule-shaping DP1 family proteins to generate and maintain the structure of the tubular endoplasmic reticulum network. Has GTPase activity, which is required for its function in ER organization. The polypeptide is Protein SEY1 (Phaeosphaeria nodorum (strain SN15 / ATCC MYA-4574 / FGSC 10173) (Glume blotch fungus)).